The primary structure comprises 104 residues: DNA-directed RNA polymerase subunit omega (104 aa).

Belongs to the RNA polymerase subunit omega family. The RNAP catalytic core consists of 2 alpha, 1 beta, 1 beta' and 1 omega subunit. When a sigma factor is associated with the core the holoenzyme is formed, which can initiate transcription.

It catalyses the reaction RNA(n) + a ribonucleoside 5'-triphosphate = RNA(n+1) + diphosphate. In terms of biological role, promotes RNA polymerase assembly. Latches the N- and C-terminal regions of the beta' subunit thereby facilitating its interaction with the beta and alpha subunits. The sequence is that of DNA-directed RNA polymerase subunit omega (rpoZ) from Streptococcus pyogenes serotype M1.